The sequence spans 238 residues: Monocyte to macrophage differentiation factor (238 aa).

At 1–28 (MRFKNRFQRFMNHRAPANGRYKPTCYEH) the chain is on the cytoplasmic side. A helical membrane pass occupies residues 29-49 (AANCYTHAFLIVPAIVGSALL). Residues 50–61 (HRLSDDCWEKIT) lie on the Lumenal side of the membrane. Residues 62–82 (AWIYGMGLCALFIVSTVFHIV) traverse the membrane as a helical segment. Residues 83–101 (SWKKSHLRTVEHCFHMCDR) are Cytoplasmic-facing. The helical transmembrane segment at 102 to 122 (MVIYFFIAASYAPWLNLRELG) threads the bilayer. Over 123–124 (PL) the chain is Lumenal. The chain crosses the membrane as a helical span at residues 125-145 (ASHMRWFIWLMAAGGTIYVFL). Residues 146–151 (YHEKYK) are Cytoplasmic-facing. Residues 152–172 (VVELFFYLTMGFSPALVVTSM) form a helical membrane-spanning segment. The Lumenal portion of the chain corresponds to 173–174 (NN). A helical transmembrane segment spans residues 175–195 (TDGLQELACGGLIYCLGVVFF). Residues 196 to 198 (KSD) are Cytoplasmic-facing. A helical membrane pass occupies residues 199 to 219 (GIIPFAHAIWHLFVATAAAVH). Residues 220–238 (YYAIWKYLYRSPTDFMRHL) are Lumenal-facing.

It belongs to the ADIPOR family. In terms of tissue distribution, exhibits relatively ubiquitous expression with preferential expression in mature (in vitro differentiated) macrophages.

It localises to the late endosome membrane. The protein localises to the lysosome membrane. In terms of biological role, involved in the dynamics of lysosomal membranes associated with microglial activation following brain lesion. The sequence is that of Monocyte to macrophage differentiation factor from Homo sapiens (Human).